The primary structure comprises 386 residues: G2/mitotic-specific cyclin-B2 (386 aa).

The disordered stretch occupies residues 45–64 (TNGKVGPSKKPSKASCAQKP).

Belongs to the cyclin family. Cyclin AB subfamily. In terms of assembly, interacts with the CDK1 protein kinase to form a serine/threonine kinase holoenzyme complex also known as maturation promoting factor (MPF). The cyclin subunit imparts substrate specificity to the complex.

Its function is as follows. Essential for the control of the cell cycle at the G2/M (mitosis) transition. The chain is G2/mitotic-specific cyclin-B2 (ccnb2) from Oryzias luzonensis (Luzon ricefish).